We begin with the raw amino-acid sequence, 359 residues long: Peptide chain release factor 1 (359 aa).

An N5-methylglutamine modification is found at Gln-235. The tract at residues 280–306 (AERQRADSERSADRKSQVGSGDRSERI) is disordered.

It belongs to the prokaryotic/mitochondrial release factor family. In terms of processing, methylated by PrmC. Methylation increases the termination efficiency of RF1.

It is found in the cytoplasm. Its function is as follows. Peptide chain release factor 1 directs the termination of translation in response to the peptide chain termination codons UAG and UAA. The chain is Peptide chain release factor 1 from Rhizobium leguminosarum bv. trifolii (strain WSM2304).